The primary structure comprises 2034 residues: Host cell factor 1 (2034 aa).

N-acetylalanine is present on A2. The residue at position 6 (S6) is a Phosphoserine. Kelch repeat units follow at residues 44–89, 93–140, 148–194, 217–265, and 266–313; these read LIVV…GFVC, RLLV…RLGH, KCYL…ITYG, KLVI…TIGN, and KMYV…LMDT. Residues K105, K163, and K244 each participate in a glycyl lysine isopeptide (Lys-Gly) (interchain with G-Cter in ubiquitin) cross-link. A Glycyl lysine isopeptide (Lys-Gly) (interchain with G-Cter in SUMO2) cross-link involves residue K282. N6-acetyllysine is present on K288. Residue K363 forms a Glycyl lysine isopeptide (Lys-Gly) (interchain with G-Cter in ubiquitin) linkage. In terms of domain architecture, Fibronectin type-III 1 spans 366-469; sequence PPARVQLVRA…TIQVLPTVPG (104 aa). The tract at residues 407–434 is disordered; the sequence is ATATSPTPNPVPSVPANPPKSPAPAAAA. Residue S411 is modified to Phosphoserine. Pro residues predominate over residues 413–428; that stretch reads TPNPVPSVPANPPKSP. The tract at residues 500–550 is required for interaction with OGT; the sequence is LVTMRPASQAGKAPVTVTSLPASVRMVVPTQSAQGTVIGSNPQMSGMAALA. Residues R504 and R524 each carry the omega-N-methylarginine modification. Phosphoserine occurs at positions 598, 666, and 669. The interval 610-722 is interaction with SIN3A; the sequence is LKTAAAQVGT…KGPLPAGTIL (113 aa). Residues 750–902 are interaction with ZBTB17; sequence ILGISSVSPS…SLAGAGAHST (153 aa). An N6-acetyllysine modification is found at K813. The segment at 813–912 is interaction with GABP2; the sequence is KIITAVPKIA…SASLATPITT (100 aa). HCF repeat repeat units lie at residues 1010–1035, 1072–1097, and 1101–1126; these read TLVC…TVVA, VRVC…ATSN, and QHGC…AMSS. The HCF repeat 4; degenerate repeat unit spans residues 1156-1182; sequence RAQGTVKPPCQTQQTNMTSTTMTVQAT. 2 positions are modified to phosphoserine: S1204 and S1223. Disordered regions lie at residues 1221–1241, 1302–1374, 1444–1477, and 1491–1525; these read GPSS…TYTT, PCET…TTST, TVTS…NITS, and RAVT…QLPP. 2 HCF repeat repeats span residues 1295–1320 and 1323–1348; these read TQVC…SNAG and QRVC…ATSN. The segment covering 1308–1321 has biased composition (low complexity); the sequence is TGTTNTATTSNAGS. One copy of the HCF repeat 7; degenerate repeat lies at 1358–1383; the sequence is QQPASGHPCETHQTTSTGTTMSVSVG. One copy of the HCF repeat 8 repeat lies at 1423-1448; the sequence is QRVCSNPPCETHETGTTHTATTVTSN. The span at 1491-1501 shows a compositional bias: low complexity; that stretch reads RAVTTVTQSTP. A Phosphothreonine modification is found at T1500. The segment covering 1502–1511 has biased composition (pro residues); it reads VPGPSVPPPE. A phosphoserine mark is found at S1506 and S1516. The stretch at 1693–1723 forms a coiled coil; that stretch reads IVLTQQELAALVQQQQQLQEAQAQAQQQHHL. S1782 is modified (phosphoserine). Fibronectin type-III domains lie at 1808–1899 and 1901–2017; these read LPPP…TCLP and FPGA…TSKD. Residues K1818 and K1819 each participate in a glycyl lysine isopeptide (Lys-Gly) (interchain with G-Cter in ubiquitin) cross-link. S1849 is modified (phosphoserine). A disordered region spans residues 2005 to 2034; the sequence is ATQVRWLQETSKDSSGTKPASKRPMSSPEM. An N6-acetyllysine modification is found at K2016.

In terms of assembly, composed predominantly of six polypeptides ranging from 110 to 150 kDa and a minor 300 kDa polypeptide. The majority of N- and C-terminal cleavage products remain tightly, albeit non-covalently, associated. Interacts with POU2F1, CREB3, ZBTB17, EGR2, E2F4, CREBZF, SP1, GABP2, Sin3 HDAC complex (SIN3A, HDAC1, HDAC2, SUDS3), SAP30, SIN3B and FHL2. Component of a MLL1 complex, composed of at least the core components KMT2A/MLL1, ASH2L, HCFC1, WDR5 and RBBP5, as well as the facultative components BACC1, CHD8, DPY30, E2F6, HCFC2, HSP70, INO80C, KANSL1, LAS1L, MAX, MCRS1, MEN1, MGA, KAT8, PELP1, PHF20, PRP31, RING2, RUVBL1, RUVBL2, SENP3, TAF1, TAF4, TAF6, TAF7, TAF9 and TEX10. Component of a THAP1/THAP3-HCFC1-OGT complex that is required for the regulation of the transcriptional activity of RRM1. Interacts directly with THAP3 (via its HBM). Interacts (via the Kelch-repeat domain) with THAP1 (via the HBM); the interaction recruits HCHC1 to the RRM1. Interacts with THAP7 and THAP11 (via the HMB). Interacts directly with OGT; the interaction, which requires the HCFC1 cleavage site domain, glycosylates and promotes the proteolytic processing of HCFC1, retains OGT in the nucleus and impacts the expression of herpes simplex virus immediate early viral genes. Component of the SET1 complex, at least composed of the catalytic subunit (SETD1A or SETD1B), WDR5, WDR82, RBBP5, ASH2L, CXXC1, HCFC1 and DPY30. Component of the NSL complex at least composed of MOF/KAT8, KANSL1, KANSL2, KANSL3, MCRS1, PHF20, OGT1/OGT, WDR5 and HCFC1. Component of a complex at least composed of ZNF335, HCFC1, CCAR2, EMSY, MKI67, RBBP5, ASH2L and WDR5; the complex is formed as a result of interactions between components of a nuclear receptor-mediated transcription complex and a histone methylation complex. Within the complex interacts with ZNF335. Interacts with TET2 and TET3. Interacts with HCFC1R1. Interacts with THAP11. Interacts (via Kelch domain) with KMT2E/MLL5 isoform 3 (via HBM motif). Interacts with E2F1. Accessory scaffold component of the polycomb repressive deubiquitinase (PR-DUB) complex, at least composed of BAP1, one of ASXL1, ASXL2 or (probably) ASXL3 and one of MBD5 or MBD6; the PR-DUB core associates with a number of accessory proteins, including FOXK1, FOXK2, KDM1B, HCFC1, YY1 and OGT. Interacts with YY1 (via Gly-rich region); the interaction is direct. Interacts with BAP1 (via HBM-like motif). Proteolytically cleaved at one or several PPCE--THET sites within the HCF repeats. Further cleavage of the primary N- and C-terminal chains results in a 'trimming' and accumulation of the smaller chains. Cleavage is promoted by O-glycosylation. In terms of processing, O-glycosylated. GlcNAcylation by OGT promotes proteolytic processing. Post-translationally, ubiquitinated. Lys-1818 and Lys-1819 are ubiquitinated both via 'Lys-48'- and 'Lys-63'-linked polyubiquitin chains. BAP1 mediated deubiquitination of 'Lys-48'-linked polyubiquitin chains; deubiquitination by BAP1 does not seem to stabilize the protein.

It localises to the cytoplasm. It is found in the nucleus. Its function is as follows. Transcriptional coregulator. Serves as a scaffold protein, bridging interactions between transcription factors, including THAP11 and ZNF143, and transcriptional coregulators. Involved in control of the cell cycle. Also antagonizes transactivation by ZBTB17 and GABP2; represses ZBTB17 activation of the p15(INK4b) promoter and inhibits its ability to recruit p300. Coactivator for EGR2 and GABP2. Tethers the chromatin modifying Set1/Ash2 histone H3 'Lys-4' methyltransferase (H3K4me) and Sin3 histone deacetylase (HDAC) complexes (involved in the activation and repression of transcription, respectively) together. Component of a THAP1/THAP3-HCFC1-OGT complex that is required for the regulation of the transcriptional activity of RRM1. As part of the NSL complex it may be involved in acetylation of nucleosomal histone H4 on several lysine residues. Recruits KMT2E/MLL5 to E2F1 responsive promoters promoting transcriptional activation and thereby facilitates G1 to S phase transition. Modulates expression of homeobox protein PDX1, perhaps acting in concert with transcription factor E2F1, thereby regulating pancreatic beta-cell growth and glucose-stimulated insulin secretion. May negatively modulate transcriptional activity of FOXO3. The chain is Host cell factor 1 from Rattus norvegicus (Rat).